A 439-amino-acid polypeptide reads, in one-letter code: Exosome complex component RRP45 (439 aa).

The segment at 1 to 268 is ARE binding; sequence MKETPLSNCE…AEITELILKA (268 aa). Ser65 is subject to Phosphoserine. Lys297 bears the N6-acetyllysine; alternate mark. Lys297 participates in a covalent cross-link: Glycyl lysine isopeptide (Lys-Gly) (interchain with G-Cter in SUMO1); alternate. A Glycyl lysine isopeptide (Lys-Gly) (interchain with G-Cter in SUMO2); alternate cross-link involves residue Lys297. 4 positions are modified to phosphoserine: Ser306, Val325, Ser327, and Ser346. Disordered regions lie at residues 335-363 and 391-439; these read GTAQ…GGGD and LSDS…RAAN. Residues 349 to 361 show a composition bias toward acidic residues; the sequence is DLEDSEKEDDEGG. A phosphoserine mark is found at Ser392, Ser394, Lys409, and Ile411. Lys419 participates in a covalent cross-link: Glycyl lysine isopeptide (Lys-Gly) (interchain with G-Cter in SUMO2). Over residues 425–439 the composition is skewed to basic residues; the sequence is SKKPVKRRKKKRAAN.

Belongs to the RNase PH family. In terms of assembly, component of the RNA exosome core complex (Exo-9), composed of EXOSC1, EXOSC2, EXOSC3, EXOSC4, EXOSC5, EXOSC6, EXOSC7, EXOSC8 and EXOSC9; within the complex interacts with EXOSC3, EXOSC4, EXOSC5 and DIS3. The catalytically inactive RNA exosome core complex (Exo-9) associates with the catalytic subunit EXOSC10/RRP6. Exo-9 may associate with DIS3 to form the nucleolar exosome complex, or DIS3L to form the cytoplasmic exosome complex. Exo-9 is formed by a hexameric base ring consisting of the heterodimers EXOSC4-EXOSC9, EXOSC5-EXOSC8 and EXOSC6-EXOSC7, and a cap ring consisting of EXOSC1, EXOSC2 and EXOSC3. The RNA exosome complex associates with cofactors C1D/RRP47, MPHOSPH6/MPP6 and MTREX/MTR4. Interacts (via C-terminus region) with SETX (via N-terminus domain); the interaction enhances SETX sumoylation. Interacts with DIS3; the interaction is direct.

The protein localises to the cytoplasm. It localises to the nucleus. It is found in the nucleolus. The protein resides in the nucleoplasm. Functionally, non-catalytic component of the RNA exosome complex which has 3'-&gt;5' exoribonuclease activity and participates in a multitude of cellular RNA processing and degradation events. In the nucleus, the RNA exosome complex is involved in proper maturation of stable RNA species such as rRNA, snRNA and snoRNA, in the elimination of RNA processing by-products and non-coding 'pervasive' transcripts, such as antisense RNA species and promoter-upstream transcripts (PROMPTs), and of mRNAs with processing defects, thereby limiting or excluding their export to the cytoplasm. The RNA exosome may be involved in Ig class switch recombination (CSR) and/or Ig variable region somatic hypermutation (SHM) by targeting AICDA deamination activity to transcribed dsDNA substrates. In the cytoplasm, the RNA exosome complex is involved in general mRNA turnover and specifically degrades inherently unstable mRNAs containing AU-rich elements (AREs) within their 3' untranslated regions, and in RNA surveillance pathways, preventing translation of aberrant mRNAs. It seems to be involved in degradation of histone mRNA. The catalytic inactive RNA exosome core complex of 9 subunits (Exo-9) is proposed to play a pivotal role in the binding and presentation of RNA for ribonucleolysis, and to serve as a scaffold for the association with catalytic subunits and accessory proteins or complexes. EXOSC9 binds to ARE-containing RNAs. This Homo sapiens (Human) protein is Exosome complex component RRP45 (EXOSC9).